Reading from the N-terminus, the 349-residue chain is MAEAEYFIWIAPEGDFEEEFGNITRMLPTGEYFSPCKRVPMTNRQAVVVFYALVFLLSLLGNSLVMLVILYRRRTRSVTDVYVLNLAIADLLFSLTLPFLAVSKWKGWIFGTPLCKMVSLLKEVNFFSGILLLACISVDRYLAIVHATRTLTRKRYLVKFVCMGTWGLSLVLSLPFAIFRQAYKPYRSGTVCYEVLGEATADLRITLRGLSHIFGFLLPLFIMLVCYGLTLRTLFKAHMRQKRRAMWVIFAVVLVFLLCCLPYNLVLLSDTLLGAHLIQDTCERRNNIDQALYITEILGFSHSCLNPVIYAFVGQSFRHEFLKILANLVHKEVLTHHSASFRTSLTTIY.

Over 1–44 (MAEAEYFIWIAPEGDFEEEFGNITRMLPTGEYFSPCKRVPMTNR) the chain is Extracellular. Residue Asn22 is glycosylated (N-linked (GlcNAc...) asparagine). A helical membrane pass occupies residues 45–71 (QAVVVFYALVFLLSLLGNSLVMLVILY). The Cytoplasmic segment spans residues 72 to 80 (RRRTRSVTD). Residues 81-101 (VYVLNLAIADLLFSLTLPFLA) traverse the membrane as a helical segment. At 102–116 (VSKWKGWIFGTPLCK) the chain is on the extracellular side. A disulfide bridge links Cys115 with Cys192. Residues 117-138 (MVSLLKEVNFFSGILLLACISV) form a helical membrane-spanning segment. The Cytoplasmic portion of the chain corresponds to 139 to 159 (DRYLAIVHATRTLTRKRYLVK). The chain crosses the membrane as a helical span at residues 160 to 179 (FVCMGTWGLSLVLSLPFAIF). The Extracellular portion of the chain corresponds to 180–204 (RQAYKPYRSGTVCYEVLGEATADLR). The chain crosses the membrane as a helical span at residues 205–225 (ITLRGLSHIFGFLLPLFIMLV). Residues 226–247 (CYGLTLRTLFKAHMRQKRRAMW) are Cytoplasmic-facing. Residues 248-269 (VIFAVVLVFLLCCLPYNLVLLS) traverse the membrane as a helical segment. The Extracellular portion of the chain corresponds to 270-290 (DTLLGAHLIQDTCERRNNIDQ). The helical transmembrane segment at 291–313 (ALYITEILGFSHSCLNPVIYAFV) threads the bilayer. Over 314 to 349 (GQSFRHEFLKILANLVHKEVLTHHSASFRTSLTTIY) the chain is Cytoplasmic.

Belongs to the G-protein coupled receptor 1 family. As to quaternary structure, interacts with IL8. Interacts with GNAI2.

The protein resides in the cell membrane. Receptor to interleukin-8, which is a powerful neutrophils chemotactic factor. Binding of IL-8 to the receptor causes activation of neutrophils. This response is mediated via a G-protein that activates a phosphatidylinositol-calcium second messenger system. The chain is C-X-C chemokine receptor type 1 (Cxcr1) from Rattus norvegicus (Rat).